Consider the following 165-residue polypeptide: Crossover junction endodeoxyribonuclease RuvC (165 aa).

Catalysis depends on residues D8, E66, and D138. Residues D8, E66, and D138 each contribute to the Mg(2+) site.

The protein belongs to the RuvC family. As to quaternary structure, homodimer which binds Holliday junction (HJ) DNA. The HJ becomes 2-fold symmetrical on binding to RuvC with unstacked arms; it has a different conformation from HJ DNA in complex with RuvA. In the full resolvosome a probable DNA-RuvA(4)-RuvB(12)-RuvC(2) complex forms which resolves the HJ. It depends on Mg(2+) as a cofactor.

The protein localises to the cytoplasm. The catalysed reaction is Endonucleolytic cleavage at a junction such as a reciprocal single-stranded crossover between two homologous DNA duplexes (Holliday junction).. Its function is as follows. The RuvA-RuvB-RuvC complex processes Holliday junction (HJ) DNA during genetic recombination and DNA repair. Endonuclease that resolves HJ intermediates. Cleaves cruciform DNA by making single-stranded nicks across the HJ at symmetrical positions within the homologous arms, yielding a 5'-phosphate and a 3'-hydroxyl group; requires a central core of homology in the junction. The consensus cleavage sequence is 5'-(A/T)TT(C/G)-3'. Cleavage occurs on the 3'-side of the TT dinucleotide at the point of strand exchange. HJ branch migration catalyzed by RuvA-RuvB allows RuvC to scan DNA until it finds its consensus sequence, where it cleaves and resolves the cruciform DNA. The chain is Crossover junction endodeoxyribonuclease RuvC from Methylococcus capsulatus (strain ATCC 33009 / NCIMB 11132 / Bath).